The following is a 136-amino-acid chain: Large ribosomal subunit protein eL27 (136 aa).

The 36-residue stretch at 5 to 40 folds into the KOW domain; sequence MKPGKVVLVLAGRYSGRKAVIVKNIDDGTSDRPYSH. N6-acetyllysine is present on residues Lys27 and Lys93.

This sequence belongs to the eukaryotic ribosomal protein eL27 family. In terms of assembly, component of the large ribosomal subunit. Interacts with RRP1B. Component of the large ribosomal subunit. Interacts with RRP1B. Interacts with DHX33.

The protein resides in the cytoplasm. It is found in the cytosol. The protein localises to the rough endoplasmic reticulum. Component of the large ribosomal subunit. Required for proper rRNA processing and maturation of 28S and 5.8S rRNAs. The polypeptide is Large ribosomal subunit protein eL27 (RPL27) (Canis lupus familiaris (Dog)).